Consider the following 858-residue polypeptide: Coiled-coil and C2 domain-containing protein 1B (858 aa).

5 disordered regions span residues 112–164, 180–199, 204–284, 329–352, and 470–533; these read VLGV…GASQ, AAAS…CERG, ESQL…ALLS, VDLS…APTA, and EKLA…SPSV. Residues 114–143 are compositionally biased toward acidic residues; it reads GVDEETEPLDGDEVADPGGSEEENGLEDTE. The segment covering 153 to 164 has biased composition (low complexity); the sequence is ASAPAAQAGASQ. The stretch at 166–212 forms a coiled coil; sequence LHALLEERIHNYREAAASAKEAGEAAKARRCERGLKTLESQLASVRR. The span at 186 to 199 shows a compositional bias: basic and acidic residues; it reads EAGEAAKARRCERG. Residue Ser-209 is modified to Phosphoserine. Low complexity predominate over residues 520–532; the sequence is PRASSSKESPSPS. Phosphoserine is present on Ser-593. Thr-596 carries the phosphothreonine modification. A coiled-coil region spans residues 611–635; that stretch reads RLSQKAEEVYAQLQKMLLEQQEKCL. The C2 domain maps to 676 to 815; it reads DPPTHHFELK…ENECEIREIV (140 aa).

This sequence belongs to the CC2D1 family. In terms of assembly, interacts with CHMP4B. As to expression, widely distributed in brain and peripheral tissues.

It localises to the nucleus. Functionally, transcription factor that binds specifically to the DRE (dual repressor element) and represses HTR1A gene transcription in neuronal cells. In Homo sapiens (Human), this protein is Coiled-coil and C2 domain-containing protein 1B (CC2D1B).